Reading from the N-terminus, the 215-residue chain is Putative glycosyltransferase ALG1L2 (215 aa).

The segment at 40 to 66 (PFRARSEPEDPDTERSAFTERDSGSGL) is disordered. The segment covering 43 to 62 (ARSEPEDPDTERSAFTERDS) has biased composition (basic and acidic residues).

This sequence belongs to the glycosyltransferase group 1 family.

In terms of biological role, putative glycosyltransferase. In Homo sapiens (Human), this protein is Putative glycosyltransferase ALG1L2 (ALG1L2).